Consider the following 312-residue polypeptide: D-apiose import binding protein (312 aa).

The first 26 residues, 1-26, serve as a signal peptide directing secretion; the sequence is MKASKRWVALAAATLTLFTATGTAQA. D-apiofuranose is bound by residues Asn39, 115–116, 162–164, Arg168, Asn218, Asp243, and Gln263; these read DR and DIN.

Belongs to the bacterial solute-binding protein 2 family.

Its subcellular location is the periplasm. Its function is as follows. Part of an ABC transporter complex involved in D-apiose import. Binds D-apiose, D-ribose and D-ribulose. This is D-apiose import binding protein from Paraburkholderia graminis (strain ATCC 700544 / DSM 17151 / LMG 18924 / NCIMB 13744 / C4D1M).